We begin with the raw amino-acid sequence, 500 residues long: MNAPIPHAVCHLNDMPLANSFASLPPAHYTALMPTPLPAPYLVCASASAAALIGLDFSDIDSAAFIETFTGNRIPDGSRPLSAVYSGHQFGVWAGQLGDGRAILLGDVPAPTMIPSGRLELQLKGAGLTPYSRMGDGRAVLRSSIREFLCSEAMAALGIPTTRALCVTGSDQIVLREQRETAAVATRMAQSFVRFGSFEHWFYNEKHDELKTLADYVIAQFYPQFKTAENPYKALLTEVTLRTAQMIAHWQAVGFMHGVMNTDNMSILGLTLDYGPFGFMEAFNATHICNHTDQQGRYSYARQPQIGEWNCYALGQTLLPLIGDVDETQNALRIYKPAYAEKFAELMRAKLGLQTQQPDDGKLFDALFAVLQGSHADFTLFFRRLGELRIGQAASREALRDLFLDRAAFDDWALQYELRLQLENSDDDARKLAMHAVNPKYVLRNYLAQIAIEKAQNKDFSEVAKLLQVLEKPFDEQPENEKYAALPPDWANDLEVSCSS.

Gly-98, Gly-100, Arg-101, Lys-124, Asp-136, Gly-137, Arg-187, and Arg-194 together coordinate ATP. Catalysis depends on Asp-263, which acts as the Proton acceptor. Mg(2+) contacts are provided by Asn-264 and Asp-273. Asp-273 is an ATP binding site.

It belongs to the SELO family. The cofactor is Mg(2+). It depends on Mn(2+) as a cofactor.

It carries out the reaction L-seryl-[protein] + ATP = 3-O-(5'-adenylyl)-L-seryl-[protein] + diphosphate. The enzyme catalyses L-threonyl-[protein] + ATP = 3-O-(5'-adenylyl)-L-threonyl-[protein] + diphosphate. It catalyses the reaction L-tyrosyl-[protein] + ATP = O-(5'-adenylyl)-L-tyrosyl-[protein] + diphosphate. The catalysed reaction is L-histidyl-[protein] + UTP = N(tele)-(5'-uridylyl)-L-histidyl-[protein] + diphosphate. It carries out the reaction L-seryl-[protein] + UTP = O-(5'-uridylyl)-L-seryl-[protein] + diphosphate. The enzyme catalyses L-tyrosyl-[protein] + UTP = O-(5'-uridylyl)-L-tyrosyl-[protein] + diphosphate. Nucleotidyltransferase involved in the post-translational modification of proteins. It can catalyze the addition of adenosine monophosphate (AMP) or uridine monophosphate (UMP) to a protein, resulting in modifications known as AMPylation and UMPylation. In Herminiimonas arsenicoxydans, this protein is Protein nucleotidyltransferase YdiU.